The primary structure comprises 251 residues: Flap endonuclease Xni (251 aa).

Mg(2+) is bound at residue Asp-104. Residues 160–249 (VLPRQLPDYW…IDGNLQQLRL (90 aa)) enclose the 5'-3' exonuclease domain. K(+) contacts are provided by Leu-171, Ala-172, Pro-180, Val-182, and Ile-185. Residues 184 to 189 (GIGPKS) are interaction with DNA.

The protein belongs to the Xni family. Mg(2+) serves as cofactor. The cofactor is K(+).

Functionally, has flap endonuclease activity. During DNA replication, flap endonucleases cleave the 5'-overhanging flap structure that is generated by displacement synthesis when DNA polymerase encounters the 5'-end of a downstream Okazaki fragment. The protein is Flap endonuclease Xni of Salmonella paratyphi A (strain ATCC 9150 / SARB42).